The primary structure comprises 310 residues: Ribosomal RNA small subunit methyltransferase H (310 aa).

S-adenosyl-L-methionine is bound by residues 32 to 34 (GGH), aspartate 52, alanine 83, aspartate 100, and glutamine 107.

This sequence belongs to the methyltransferase superfamily. RsmH family.

It is found in the cytoplasm. The enzyme catalyses cytidine(1402) in 16S rRNA + S-adenosyl-L-methionine = N(4)-methylcytidine(1402) in 16S rRNA + S-adenosyl-L-homocysteine + H(+). Functionally, specifically methylates the N4 position of cytidine in position 1402 (C1402) of 16S rRNA. The chain is Ribosomal RNA small subunit methyltransferase H from Geobacillus sp. (strain WCH70).